A 358-amino-acid chain; its full sequence is Neutral protease 2 homolog PADG_00776 (358 aa).

Positions 1-19 (MRRVSGILAVAAFTISAFA) are cleaved as a signal peptide. The propeptide occupies 20–185 (GVIQPVAKDA…MNQFVKIAKL (166 aa)). Cystine bridges form between Cys-188/Cys-259 and Cys-266/Cys-284. A glycan (N-linked (GlcNAc...) asparagine) is linked at Asn-249. His-309 lines the Zn(2+) pocket. The active site involves Glu-310. Residues His-313 and Asp-324 each coordinate Zn(2+).

It belongs to the peptidase M35 family. Requires Zn(2+) as cofactor.

The protein localises to the secreted. It catalyses the reaction Preferential cleavage of bonds with hydrophobic residues in P1'. Also 3-Asn-|-Gln-4 and 8-Gly-|-Ser-9 bonds in insulin B chain.. Secreted metalloproteinase that allows assimilation of proteinaceous substrates. Shows high activities on basic nuclear substrates such as histone and protamine. This chain is Neutral protease 2 homolog PADG_00776, found in Paracoccidioides brasiliensis (strain Pb18).